The sequence spans 324 residues: Pseudouridylate synthase RPUSD4, mitochondrial (324 aa).

The N-terminal 11 residues, 1–11 (MAAAGGGATRG), are a transit peptide targeting the mitochondrion. Aspartate 105 is an active-site residue.

The protein belongs to the pseudouridine synthase RluA family.

The protein localises to the mitochondrion matrix. Its subcellular location is the nucleus. The protein resides in the cytoplasm. The enzyme catalyses uridine in 5S rRNA = pseudouridine in 5S rRNA. It carries out the reaction a uridine in tRNA = a pseudouridine in tRNA. It catalyses the reaction a uridine in mRNA = a pseudouridine in mRNA. Functionally, catalyzes uridine to pseudouridine isomerization (pseudouridylation) of different mitochondrial RNA substrates. Acts on position 1397 in 16S mitochondrial ribosomal RNA (16S mt-rRNA). This modification is required for the assembly of 16S mt-rRNA into a functional mitochondrial ribosome. Acts on position 39 in mitochondrial tRNA(Phe). Also catalyzes pseudouridylation of mRNAs in nucleus: acts as a regulator of pre-mRNA splicing by mediating pseudouridylation of pre-mRNAs at locations associated with alternatively spliced regions. Pseudouridylation of pre-mRNAs near splice sites directly regulates mRNA splicing and mRNA 3'-end processing. In Xenopus tropicalis (Western clawed frog), this protein is Pseudouridylate synthase RPUSD4, mitochondrial.